The primary structure comprises 141 residues: Hemoglobin subunit alpha (141 aa).

Residues valine 1–arginine 141 enclose the Globin domain. Serine 3 bears the Phosphoserine mark. An N6-succinyllysine modification is found at lysine 7. At threonine 8 the chain carries Phosphothreonine. Lysine 11 is subject to N6-succinyllysine. An N6-acetyllysine; alternate modification is found at lysine 16. Position 16 is an N6-succinyllysine; alternate (lysine 16). Tyrosine 24 bears the Phosphotyrosine mark. The residue at position 35 (serine 35) is a Phosphoserine. At lysine 40 the chain carries N6-succinyllysine. Serine 49 is modified (phosphoserine). Histidine 58 is an O2 binding site. Residue histidine 87 coordinates heme b. The residue at position 102 (serine 102) is a Phosphoserine. Phosphothreonine is present on threonine 108. A Phosphoserine modification is found at serine 124. Residues threonine 134 and threonine 137 each carry the phosphothreonine modification. The residue at position 138 (serine 138) is a Phosphoserine.

The protein belongs to the globin family. In terms of assembly, heterotetramer of two alpha chains and two beta chains. Red blood cells.

Functionally, involved in oxygen transport from the lung to the various peripheral tissues. Hemopressin acts as an antagonist peptide of the cannabinoid receptor CNR1. Hemopressin-binding efficiently blocks cannabinoid receptor CNR1 and subsequent signaling. This chain is Hemoglobin subunit alpha (HBA), found in Vulpes vulpes (Red fox).